We begin with the raw amino-acid sequence, 113 residues long: ATP-dependent Clp protease adapter protein ClpS (113 aa).

The disordered stretch occupies residues 1 to 24; the sequence is MTAQLHMMSDKHDQDNDASVLLQT.

This sequence belongs to the ClpS family. As to quaternary structure, binds to the N-terminal domain of the chaperone ClpA.

Its function is as follows. Involved in the modulation of the specificity of the ClpAP-mediated ATP-dependent protein degradation. This is ATP-dependent Clp protease adapter protein ClpS from Ruegeria pomeroyi (strain ATCC 700808 / DSM 15171 / DSS-3) (Silicibacter pomeroyi).